The chain runs to 123 residues: Large ribosomal subunit protein bL12 (123 aa).

This sequence belongs to the bacterial ribosomal protein bL12 family. In terms of assembly, homodimer. Part of the ribosomal stalk of the 50S ribosomal subunit. Forms a multimeric L10(L12)X complex, where L10 forms an elongated spine to which 2 to 4 L12 dimers bind in a sequential fashion. Binds GTP-bound translation factors.

In terms of biological role, forms part of the ribosomal stalk which helps the ribosome interact with GTP-bound translation factors. Is thus essential for accurate translation. This chain is Large ribosomal subunit protein bL12, found in Mycoplasmopsis agalactiae (strain NCTC 10123 / CIP 59.7 / PG2) (Mycoplasma agalactiae).